Consider the following 217-residue polypeptide: MGQKVCAHGFRVGPTLIKDWDSILYAEKHYKTLFIQDLKIRDLINKWFNQAQISRVLIERPSNKSIIININAKKPNIIIGKNGSEIDKLKKAIENMTFLKEVYINIHEVRKFNIDAAIVAQTIAAQLEKRVSFRKAMKTAIQASFKQGGQGIRVSCSGRLGGAEIARTEWYIEGRMPLHTLRADIDYSTAEAITTYGVIGVKVWIYKGEYKENKRYN.

The KH type-2 domain maps to 40-110 (IRDLINKWFN…EVYINIHEVR (71 aa)).

It belongs to the universal ribosomal protein uS3 family. Part of the 30S ribosomal subunit. Forms a tight complex with proteins S10 and S14.

Its function is as follows. Binds the lower part of the 30S subunit head. Binds mRNA in the 70S ribosome, positioning it for translation. The sequence is that of Small ribosomal subunit protein uS3 from Rickettsia typhi (strain ATCC VR-144 / Wilmington).